Consider the following 90-residue polypeptide: Small ribosomal subunit protein bS20 (90 aa).

Positions 1 to 25 (MANSAQARKRARQAAKANSHNSALR) are disordered.

It belongs to the bacterial ribosomal protein bS20 family.

Its function is as follows. Binds directly to 16S ribosomal RNA. The polypeptide is Small ribosomal subunit protein bS20 (Burkholderia multivorans (strain ATCC 17616 / 249)).